Here is a 541-residue protein sequence, read N- to C-terminus: Putative ammonium transporter sll0537 (541 aa).

11 helical membrane-spanning segments follow: residues 6–26 (TLWLLLCAGLVFFMQAGFMCL), 44–64 (FADFGISVALFWSFGFSIMFG), 86–106 (LAVFFLFQAMFCGTATTIISG), 117–137 (YLLVAGLASGLIYPLFGDWAW), 161–181 (FAGSTVVHSVGAWIGLATILV), 203–223 (MPFSVLGTLILWFGWLGFNGG), 235–255 (IMVNTVLAGVGGMLMAGLISL), 260–280 (MIQVEPLMNGSLAGLVAITAS), 283–303 (VVMTPIAMVIGATGSAIAYLV), 316–336 (VDAVAVHGGAGVWGTLCVGLF), and 356–376 (LLGIGVCTLWAFGLAWVFLTL).

Belongs to the ammonia transporter channel (TC 1.A.11.2) family.

Its subcellular location is the cell membrane. In Synechocystis sp. (strain ATCC 27184 / PCC 6803 / Kazusa), this protein is Putative ammonium transporter sll0537.